The following is a 446-amino-acid chain: Adenylosuccinate synthetase (446 aa).

GTP-binding positions include 20–26 and 48–50; these read GDEGKGK and GHT. Residue Asp-21 is the Proton acceptor of the active site. 2 residues coordinate Mg(2+): Asp-21 and Gly-48. IMP-binding positions include 21-24, 46-49, Thr-137, Arg-151, Gln-232, Thr-247, and Arg-319; these read DEGK and NAGH. The active-site Proton donor is the His-49. 315–321 contacts substrate; sequence SVTGRPR. GTP is bound by residues Arg-321, 347–349, and 429–431; these read KLD and STG.

This sequence belongs to the adenylosuccinate synthetase family. In terms of assembly, homodimer. Requires Mg(2+) as cofactor.

It is found in the cytoplasm. It carries out the reaction IMP + L-aspartate + GTP = N(6)-(1,2-dicarboxyethyl)-AMP + GDP + phosphate + 2 H(+). Its pathway is purine metabolism; AMP biosynthesis via de novo pathway; AMP from IMP: step 1/2. Plays an important role in the de novo pathway of purine nucleotide biosynthesis. Catalyzes the first committed step in the biosynthesis of AMP from IMP. This chain is Adenylosuccinate synthetase, found in Ralstonia pickettii (strain 12J).